The chain runs to 462 residues: MIRLRFAPSPTGLLHVGGARTALFNWLYAKKHNGKFIIRIEDTDTERSTKEYETKILSALEWLGLNWDEGPDIGGGVGPYRQSERLHIYQDIAQKLINEKLAYYAVYDGENEIHRSFEYPKKFKDKSIVVKFKVVKEDKTNFHDLLKGEMSFENKFFNDFIIIKSNGFPTYNFAVVVDDHFMKISHVFRGEDHLSNTPKQIMIYNALGWKNPTFMHIPLILGNDKTPLSKRHGGTSVDFFKESGILNNALLNYLAILGWHVDEEIFNVKKKIHTFDYRNISNKSVVFDYKKLEWLNGQHMRNLDIEELIIKFKEFLKLKNYNLNIDETLEYTKDVIIICREKVNTLSQLFEISFSFFTEEYNYEENYIKKFLKKKETGDILRKAIESFEKLENYEISSIENTLRKIVEDMNLATKKVFQTIRGALLGKLVTPGLFESIEVLGKEKTLKRLKKTLDIWEKYEV.

The short motif at 8–18 (PSPTGLLHVGG) is the 'HIGH' region element. Positions 227–231 (PLSKR) match the 'KMSKS' region motif. An ATP-binding site is contributed by K230.

This sequence belongs to the class-I aminoacyl-tRNA synthetase family. Glutamate--tRNA ligase type 1 subfamily. Monomer.

Its subcellular location is the cytoplasm. The catalysed reaction is tRNA(Glu) + L-glutamate + ATP = L-glutamyl-tRNA(Glu) + AMP + diphosphate. Catalyzes the attachment of glutamate to tRNA(Glu) in a two-step reaction: glutamate is first activated by ATP to form Glu-AMP and then transferred to the acceptor end of tRNA(Glu). The sequence is that of Glutamate--tRNA ligase 2 from Thermosipho melanesiensis (strain DSM 12029 / CIP 104789 / BI429).